The sequence spans 1177 residues: Putative ATP-dependent RNA helicase TDRD12 (1177 aa).

Residues 56–118 (TLEEGQVCVV…RVVVESFMQL (63 aa)) enclose the Tudor 1 domain. Residues 447–635 (WPPIARGCDV…KEFMNDPYIV (189 aa)) enclose the Helicase ATP-binding domain. ATP is bound at residue 460 to 467 (SHCESNPL). A DEAH box motif is present at residues 574–577 (DEVE). Residues 900-999 (IVDKHMDLYA…HTLPPQAVEF (100 aa)) form the Tudor 2 domain. The tract at residues 1098 to 1177 (EESLSQTPPR…VFKRWLSSNR (80 aa)) is disordered. Over residues 1100-1115 (SLSQTPPRVTGTSPAQ) the composition is skewed to polar residues.

As to quaternary structure, component of a mRNP complex containing PIWIL2, TDRD1 and piRNAs. Component of the PET complex, at least composed of EXD1, PIWIL2, TDRD12 and piRNAs.

The catalysed reaction is ATP + H2O = ADP + phosphate + H(+). In terms of biological role, probable ATP-binding RNA helicase required during spermatogenesis to repress transposable elements and preventing their mobilization, which is essential for the germline integrity. Acts via the piRNA metabolic process, which mediates the repression of transposable elements during meiosis by forming complexes composed of piRNAs and Piwi proteins and governs the methylation and subsequent repression of transposons. Involved in the secondary piRNAs metabolic process. Acts via the PET complex, a multiprotein complex required during the secondary piRNAs metabolic process for the PIWIL2 slicing-triggered loading of PIWIL4 piRNAs. The polypeptide is Putative ATP-dependent RNA helicase TDRD12 (TDRD12) (Homo sapiens (Human)).